A 348-amino-acid chain; its full sequence is D-erythrose-4-phosphate dehydrogenase (348 aa).

NAD(+)-binding positions include 12–13 (RI) and Arg81. Substrate is bound by residues 154–156 (SCT), Arg200, 213–214 (TK), and Arg236. Cys155 serves as the catalytic Nucleophile. Asn318 lines the NAD(+) pocket.

Belongs to the glyceraldehyde-3-phosphate dehydrogenase family. Epd subfamily. Homotetramer.

The protein resides in the cytoplasm. The catalysed reaction is D-erythrose 4-phosphate + NAD(+) + H2O = 4-phospho-D-erythronate + NADH + 2 H(+). Its pathway is cofactor biosynthesis; pyridoxine 5'-phosphate biosynthesis; pyridoxine 5'-phosphate from D-erythrose 4-phosphate: step 1/5. Functionally, catalyzes the NAD-dependent conversion of D-erythrose 4-phosphate to 4-phosphoerythronate. The chain is D-erythrose-4-phosphate dehydrogenase from Salmonella agona (strain SL483).